The following is a 239-amino-acid chain: UDP-2,3-diacylglucosamine hydrolase (239 aa).

Residues Asp-8, His-10, Asp-41, Asn-78, and His-113 each contribute to the Mn(2+) site. Residue 78-79 coordinates substrate; sequence NR. Substrate contacts are provided by Asp-121, Ser-159, Asn-163, Lys-166, and His-194. Residues His-194 and His-196 each contribute to the Mn(2+) site.

Belongs to the LpxH family. Mn(2+) serves as cofactor.

It is found in the cell inner membrane. The catalysed reaction is UDP-2-N,3-O-bis[(3R)-3-hydroxytetradecanoyl]-alpha-D-glucosamine + H2O = 2-N,3-O-bis[(3R)-3-hydroxytetradecanoyl]-alpha-D-glucosaminyl 1-phosphate + UMP + 2 H(+). The protein operates within glycolipid biosynthesis; lipid IV(A) biosynthesis; lipid IV(A) from (3R)-3-hydroxytetradecanoyl-[acyl-carrier-protein] and UDP-N-acetyl-alpha-D-glucosamine: step 4/6. In terms of biological role, hydrolyzes the pyrophosphate bond of UDP-2,3-diacylglucosamine to yield 2,3-diacylglucosamine 1-phosphate (lipid X) and UMP by catalyzing the attack of water at the alpha-P atom. Involved in the biosynthesis of lipid A, a phosphorylated glycolipid that anchors the lipopolysaccharide to the outer membrane of the cell. This chain is UDP-2,3-diacylglucosamine hydrolase, found in Shewanella sp. (strain MR-4).